Here is a 428-residue protein sequence, read N- to C-terminus: Histidine--tRNA ligase (428 aa).

Belongs to the class-II aminoacyl-tRNA synthetase family. In terms of assembly, homodimer.

It localises to the cytoplasm. The catalysed reaction is tRNA(His) + L-histidine + ATP = L-histidyl-tRNA(His) + AMP + diphosphate + H(+). This is Histidine--tRNA ligase from Azotobacter vinelandii (strain DJ / ATCC BAA-1303).